Here is a 344-residue protein sequence, read N- to C-terminus: tRNA(Ile)-lysidine synthase (344 aa).

35–40 provides a ligand contact to ATP; it reads SGGPDS.

Belongs to the tRNA(Ile)-lysidine synthase family.

It localises to the cytoplasm. It catalyses the reaction cytidine(34) in tRNA(Ile2) + L-lysine + ATP = lysidine(34) in tRNA(Ile2) + AMP + diphosphate + H(+). Ligates lysine onto the cytidine present at position 34 of the AUA codon-specific tRNA(Ile) that contains the anticodon CAU, in an ATP-dependent manner. Cytidine is converted to lysidine, thus changing the amino acid specificity of the tRNA from methionine to isoleucine. The sequence is that of tRNA(Ile)-lysidine synthase from Methylobacterium sp. (strain 4-46).